The sequence spans 155 residues: Small ribosomal subunit protein uS7c (155 aa).

It belongs to the universal ribosomal protein uS7 family. Part of the 30S ribosomal subunit.

It localises to the plastid. The protein resides in the chloroplast. Its function is as follows. One of the primary rRNA binding proteins, it binds directly to 16S rRNA where it nucleates assembly of the head domain of the 30S subunit. This is Small ribosomal subunit protein uS7c (rps7) from Canella winterana (Wild cinnamon).